Reading from the N-terminus, the 104-residue chain is Fusaric acid biosynthesis protein 2 (104 aa).

The protein belongs to the YciI family.

Its pathway is mycotoxin biosynthesis. Functionally, part of the gene cluster that mediates the biosynthesis of fusaric acid, a mycotoxin with low to moderate toxicity to animals and humans, but with high phytotoxic properties. L-aspartate is suggested as fusaric acid amino acid precursor that is activated and further processed to O-acetyl-L-homoserine by cluster enzymes aspartate kinase FUB3 and homoserine O-acetyltransferase FUB5, as well as enzymes of the primary metabolism. The polyketide synthase (PKS) FUB1 generates the triketide trans-2-hexenal which is presumptively released by the hydrolase FUB4 and linked to the NRPS-bound amino acid precursor by NAD(P)-dependent dehydrogenase FUB6. FUB1, FUB4, and the non-canonical NRPS Fub8 may form an enzyme complex. Further processing of the NRPS-bound intermediate might be carried out by FUB6 and the sulfhydrylase FUB7, enabling a spontaneous electrocyclization to close the carbon backbone of fusaric acid. Dihydrofusaric acid is likely to be released via reduction by the thioester reductase (TR) domain of FUB8 whereupon the final oxidation to fusaric acid may (also) be performed by the FMN-dependent dehydrogenase FUB9. The protein is Fusaric acid biosynthesis protein 2 of Gibberella fujikuroi (strain CBS 195.34 / IMI 58289 / NRRL A-6831) (Bakanae and foot rot disease fungus).